We begin with the raw amino-acid sequence, 329 residues long: D-alanine--D-alanine ligase (329 aa).

One can recognise an ATP-grasp domain in the interval 120-326 (KLWLSAIGIP…FADYLEQILR (207 aa)). 150–205 (ALAKWGKVFIKAASQGSSVGCYSASNEADLVKGIADAFGYSEQVLIEKAVKPRELE) contacts ATP. 3 residues coordinate Mg(2+): aspartate 280, glutamate 293, and asparagine 295.

Belongs to the D-alanine--D-alanine ligase family. Mg(2+) is required as a cofactor. It depends on Mn(2+) as a cofactor.

The protein resides in the cytoplasm. It carries out the reaction 2 D-alanine + ATP = D-alanyl-D-alanine + ADP + phosphate + H(+). It functions in the pathway cell wall biogenesis; peptidoglycan biosynthesis. In terms of biological role, cell wall formation. The sequence is that of D-alanine--D-alanine ligase from Aeromonas hydrophila subsp. hydrophila (strain ATCC 7966 / DSM 30187 / BCRC 13018 / CCUG 14551 / JCM 1027 / KCTC 2358 / NCIMB 9240 / NCTC 8049).